The primary structure comprises 95 residues: Translation initiation factor 1A (95 aa).

The 75-residue stretch at 6-80 (SRKNLRMPEE…EKADITWRYE (75 aa)) folds into the S1-like domain.

The protein belongs to the eIF-1A family.

In terms of biological role, seems to be required for maximal rate of protein biosynthesis. Enhances ribosome dissociation into subunits and stabilizes the binding of the initiator Met-tRNA(I) to 40 S ribosomal subunits. In Haloarcula marismortui (strain ATCC 43049 / DSM 3752 / JCM 8966 / VKM B-1809) (Halobacterium marismortui), this protein is Translation initiation factor 1A.